The following is an 884-amino-acid chain: E3 ubiquitin-protein ligase BRE1-like 1 (884 aa).

The interval 1-37 (MGSTGEPDRKRRLSSSVAPGGGAPVSPAKRLAVAPTS) is disordered. Residues 49 to 86 (YKNQKLSEQLEAHKFEYRALENKFAGLKEKQRTHNETL) adopt a coiled-coil conformation. Residues 107 to 127 (KSGSPNSSPGSGHNNVQKDGT) are disordered. Residues 108-121 (SGSPNSSPGSGHNN) show a composition bias toward low complexity. Coiled-coil stretches lie at residues 216-541 (LNNV…ELKL), 580-663 (SKLE…LQQI), 696-762 (RNLQ…QSLD), and 789-827 (KKRI…KEYR). The segment at 832–871 (CGICHDRQKEVVITKCYHLFCNQCIQKSLGNRQRRCPSCS) adopts an RING-type zinc-finger fold.

It belongs to the BRE1 family. Interacts with SKIPA. Interacts with HUB2.

The protein resides in the nucleus. The enzyme catalyses S-ubiquitinyl-[E2 ubiquitin-conjugating enzyme]-L-cysteine + [acceptor protein]-L-lysine = [E2 ubiquitin-conjugating enzyme]-L-cysteine + N(6)-ubiquitinyl-[acceptor protein]-L-lysine.. Its pathway is protein modification; protein ubiquitination. Functionally, E3 ubiquitin-protein ligase that monoubiquitinates H2B to form H2BK143ub1. H2BK143ub1 gives a specific tag for epigenetic transcriptional activation and is a prerequisite for H3 Lys-4 methylation (H3K4me). It thereby plays a central role in histone code and gene regulation. H2B monoubiquitination (H2BK143ub1), mediated by HUB1, modulates transcriptional regulation of anther development, likely by promoting histone H3K4 dimethylation (H3K4me2) in the chromatin of the key tapetum degradation-related genes C4, CP1 and UDT1. The chain is E3 ubiquitin-protein ligase BRE1-like 1 from Oryza sativa subsp. japonica (Rice).